A 637-amino-acid chain; its full sequence is Protein RRP6-like 1 (637 aa).

The 3'-5' exonuclease domain occupies 118–283 (VEEVKDLEDL…YIYDVMRMEL (166 aa)). Residues 334–414 (NAVQLSIVAG…RRSMQNAAAF (81 aa)) enclose the HRDC domain. Residues 553–565 (VDDDDDDDDDESY) are compositionally biased toward acidic residues. A disordered region spans residues 553 to 624 (VDDDDDDDDD…EDMRRRSEKH (72 aa)). The span at 580-598 (ETPSKGSPSLTQKPKTCNT) shows a compositional bias: polar residues. A compositionally biased stretch (acidic residues) spans 602–614 (VLDDDDDSESRED).

The protein resides in the nucleus. It localises to the nucleoplasm. Functionally, acts as an important epigenetic regulator through multiple silencing mechanisms. Involved in transcriptional gene silencing (TGS). Plays a role for DNA methylation in the RNA-directed DNA methylation (RdDM) pathway. Contributes to the methylation status of the retrotransposon SN1. Required for DNA methylation only at a subset of RdDM target loci. Plays a regulatory role in RdDM through retention of non-coding RNAs (ncRNAs) in normal cells. Helps to retain Pol V-transcribed RNAs in chromatin to enable their scaffold function and is required for genome-wide Pol IV-dependent siRNA (24 nt siRNA) production that may involve retention of Pol IV transcripts. Involved in association with RRP6L2 in the silencing of the solo LTR locus. Controls levels of ncRNAs from the solo LTR locus. Seems to function independently of the RdDM pathway. Functions redundantly with RRP6L2 in the regulation of FLC locus. Participates in the maintenance of trimethylated 'Lys-27' (H3K27me3) at FLC locus via the regulation of antisense long non-coding RNAs (lncRNAs) and the regulation of diverse antisense RNAs derived from the FLC locus. Seems not involved in the exosomal RNA degradation. Can complement the growth defect of a yeast mutant lacking RRP6 exonuclease. This Arabidopsis thaliana (Mouse-ear cress) protein is Protein RRP6-like 1.